We begin with the raw amino-acid sequence, 448 residues long: C4-dicarboxylate transport protein (448 aa).

9 helical membrane passes run 13–33 (SLYA…HFYP), 49–69 (LIKM…IAGM), 81–101 (LALL…LLVV), 149–169 (AFAK…GFAL), 193–213 (IVGI…AFTI), 227–247 (LMGA…GIVS), 294–314 (VVGL…SIYL), 336–356 (TLLA…GSGF), and 357–377 (IVLA…LALI).

It belongs to the dicarboxylate/amino acid:cation symporter (DAACS) (TC 2.A.23) family.

It localises to the cell inner membrane. Responsible for the transport of dicarboxylates such as succinate, fumarate, and malate from the periplasm across the membrane. The polypeptide is C4-dicarboxylate transport protein (Albidiferax ferrireducens (strain ATCC BAA-621 / DSM 15236 / T118) (Rhodoferax ferrireducens)).